Reading from the N-terminus, the 308-residue chain is Glycerol-3-phosphate dehydrogenase [NAD(P)+] (308 aa).

Residues Trp15, Arg35, Arg36, and Lys83 each contribute to the NADPH site. Sn-glycerol 3-phosphate contacts are provided by Lys83 and Gly111. Ser115 provides a ligand contact to NADPH. Lys166, Asp219, Ser229, Arg230, and Asn231 together coordinate sn-glycerol 3-phosphate. Lys166 (proton acceptor) is an active-site residue. Residue Arg230 coordinates NADPH. Position 256 (Glu256) interacts with NADPH.

This sequence belongs to the NAD-dependent glycerol-3-phosphate dehydrogenase family.

Its subcellular location is the cytoplasm. The catalysed reaction is sn-glycerol 3-phosphate + NAD(+) = dihydroxyacetone phosphate + NADH + H(+). The enzyme catalyses sn-glycerol 3-phosphate + NADP(+) = dihydroxyacetone phosphate + NADPH + H(+). Its pathway is membrane lipid metabolism; glycerophospholipid metabolism. Functionally, catalyzes the reduction of the glycolytic intermediate dihydroxyacetone phosphate (DHAP) to sn-glycerol 3-phosphate (G3P), the key precursor for phospholipid synthesis. The chain is Glycerol-3-phosphate dehydrogenase [NAD(P)+] from Synechococcus elongatus (strain ATCC 33912 / PCC 7942 / FACHB-805) (Anacystis nidulans R2).